A 1098-amino-acid polypeptide reads, in one-letter code: Beta-alanine-activating enzyme (1098 aa).

ATP-binding positions include 198–206 (TSGTTGIPK), Asp428, Arg442, and Lys527. The region spanning 553–630 (EDLWEKLQYL…EIYNHILQTV (78 aa)) is the Carrier domain. Ser589 carries the post-translational modification O-(pantetheine 4'-phosphoryl)serine. Phosphoserine is present on residues Ser649 and Ser724.

This sequence belongs to the ATP-dependent AMP-binding enzyme family. As to expression, ubiquitously expressed in adult tissues.

Functionally, covalently binds beta-alanine in an ATP-dependent manner to form a thioester bond with its phosphopantetheine group and transfers it to an, as yet, unknown acceptor. May be required for a post-translational protein modification or for post-transcriptional modification of an RNA. This chain is Beta-alanine-activating enzyme (AASDH), found in Homo sapiens (Human).